The following is a 254-amino-acid chain: Trypsin (254 aa).

Residues 1–16 form the signal peptide; it reads MLRFIAVFALVNCALA. The propeptide at 17–26 is activation peptide; the sequence is GTLPNDLDGR. The region spanning 27 to 252 is the Peptidase S1 domain; sequence IVNGVDTTIE…VRSWIEKTAK (226 aa). C53 and C69 are disulfide-bonded. Residues H68 and D113 each act as charge relay system in the active site. Intrachain disulfides connect C154–C158, C178–C195, and C204–C228. The active-site Charge relay system is S208.

The protein belongs to the peptidase S1 family.

It is found in the secreted. It localises to the extracellular space. The enzyme catalyses Preferential cleavage: Arg-|-Xaa, Lys-|-Xaa.. Functionally, involved in digestion of a protein meal. The protein is Trypsin of Sarcophaga bullata (Grey flesh fly).